The sequence spans 1002 residues: Lon protease homolog, mitochondrial (1002 aa).

A Lon N-terminal domain is found at 102–313; the sequence is VIALPLPHRP…LTLELVKKEM (212 aa). Residue 468 to 475 coordinates ATP; sequence GPPGVGKT. The 185-residue stretch at 811–995 folds into the Lon proteolytic domain; the sequence is QTPVGVVMGL…NEIFDIAFQS (185 aa). Catalysis depends on residues Ser901 and Lys944.

Belongs to the peptidase S16 family. As to quaternary structure, homohexamer or homoheptamer. Organized in a ring with a central cavity.

Its subcellular location is the mitochondrion matrix. The enzyme catalyses Hydrolysis of proteins in presence of ATP.. In terms of biological role, ATP-dependent serine protease that mediates the selective degradation of misfolded, unassembled or oxidatively damaged polypeptides as well as certain short-lived regulatory proteins in the mitochondrial matrix. May also have a chaperone function in the assembly of inner membrane protein complexes. Participates in the regulation of mitochondrial gene expression and in the maintenance of the integrity of the mitochondrial genome. Binds to mitochondrial DNA in a site-specific manner. This Oryza sativa subsp. japonica (Rice) protein is Lon protease homolog, mitochondrial.